A 467-amino-acid polypeptide reads, in one-letter code: Glutamate--tRNA ligase (467 aa).

The short motif at 9–19 (PSPTGYLHIGG) is the 'HIGH' region element. A 'KMSKS' region motif is present at residues 237-241 (KLSKR). Lysine 240 contacts ATP.

This sequence belongs to the class-I aminoacyl-tRNA synthetase family. Glutamate--tRNA ligase type 1 subfamily. In terms of assembly, monomer.

Its subcellular location is the cytoplasm. It catalyses the reaction tRNA(Glu) + L-glutamate + ATP = L-glutamyl-tRNA(Glu) + AMP + diphosphate. Catalyzes the attachment of glutamate to tRNA(Glu) in a two-step reaction: glutamate is first activated by ATP to form Glu-AMP and then transferred to the acceptor end of tRNA(Glu). The chain is Glutamate--tRNA ligase from Xylella fastidiosa (strain M23).